A 385-amino-acid polypeptide reads, in one-letter code: Benzoate O-methyltransferase (385 aa).

Tyrosine 18 lines the S-adenosyl-L-homocysteine pocket. Glutamine 25 provides a ligand contact to benzoate. The S-adenosyl-L-homocysteine site is built by cysteine 59, asparagine 64, aspartate 106, leucine 107, serine 145, and tyrosine 146. Tryptophan 167 provides a ligand contact to benzoate. Positions 184, 270, 272, and 273 each coordinate Mg(2+).

The protein belongs to the methyltransferase superfamily. Type-7 methyltransferase family. SABATH subfamily. It depends on Mg(2+) as a cofactor.

The enzyme catalyses benzoate + S-adenosyl-L-methionine = methyl benzoate + S-adenosyl-L-homocysteine. Its function is as follows. Methyltransferase involved in the biosynthesis of methyl benzoate in response to stresses. Utilizes exclusively benzoic acid (BA) as substrate. In Zea mays (Maize), this protein is Benzoate O-methyltransferase (OMT8).